A 145-amino-acid polypeptide reads, in one-letter code: Putative pre-16S rRNA nuclease (145 aa).

The protein belongs to the YqgF nuclease family.

It is found in the cytoplasm. In terms of biological role, could be a nuclease involved in processing of the 5'-end of pre-16S rRNA. This Levilactobacillus brevis (strain ATCC 367 / BCRC 12310 / CIP 105137 / JCM 1170 / LMG 11437 / NCIMB 947 / NCTC 947) (Lactobacillus brevis) protein is Putative pre-16S rRNA nuclease.